The sequence spans 331 residues: GTP 3',8-cyclase (331 aa).

In terms of domain architecture, Radical SAM core spans 6 to 231; it reads PFGRTISYLR…TDIPFKTGGP (226 aa). Arg-15 contacts GTP. [4Fe-4S] cluster is bound by residues Cys-22 and Cys-26. Position 28 (Tyr-28) interacts with S-adenosyl-L-methionine. Cys-29 provides a ligand contact to [4Fe-4S] cluster. Arg-64 is a GTP binding site. Gly-68 serves as a coordination point for S-adenosyl-L-methionine. GTP is bound at residue Thr-98. Ser-122 provides a ligand contact to S-adenosyl-L-methionine. Lys-158 is a GTP binding site. Met-192 provides a ligand contact to S-adenosyl-L-methionine. The [4Fe-4S] cluster site is built by Cys-255 and Cys-258. 260 to 262 contributes to the GTP binding site; that stretch reads RVR. [4Fe-4S] cluster is bound at residue Cys-272.

The protein belongs to the radical SAM superfamily. MoaA family. As to quaternary structure, monomer and homodimer. [4Fe-4S] cluster serves as cofactor.

The enzyme catalyses GTP + AH2 + S-adenosyl-L-methionine = (8S)-3',8-cyclo-7,8-dihydroguanosine 5'-triphosphate + 5'-deoxyadenosine + L-methionine + A + H(+). It functions in the pathway cofactor biosynthesis; molybdopterin biosynthesis. Its function is as follows. Catalyzes the cyclization of GTP to (8S)-3',8-cyclo-7,8-dihydroguanosine 5'-triphosphate. In Mesorhizobium japonicum (strain LMG 29417 / CECT 9101 / MAFF 303099) (Mesorhizobium loti (strain MAFF 303099)), this protein is GTP 3',8-cyclase.